The following is a 152-amino-acid chain: UPF0178 protein SAR0734 (152 aa).

This sequence belongs to the UPF0178 family.

In Staphylococcus aureus (strain MRSA252), this protein is UPF0178 protein SAR0734.